A 251-amino-acid chain; its full sequence is tRNA (guanine-N(1)-)-methyltransferase (251 aa).

Residues glycine 114 and 134–139 each bind S-adenosyl-L-methionine; that span reads IGDYVL.

It belongs to the RNA methyltransferase TrmD family. Homodimer.

The protein localises to the cytoplasm. It carries out the reaction guanosine(37) in tRNA + S-adenosyl-L-methionine = N(1)-methylguanosine(37) in tRNA + S-adenosyl-L-homocysteine + H(+). Functionally, specifically methylates guanosine-37 in various tRNAs. The polypeptide is tRNA (guanine-N(1)-)-methyltransferase (Pelotomaculum thermopropionicum (strain DSM 13744 / JCM 10971 / SI)).